A 115-amino-acid chain; its full sequence is NAD(P)H-quinone oxidoreductase subunit M (115 aa).

Belongs to the complex I NdhM subunit family. In terms of assembly, NDH-1 can be composed of about 15 different subunits; different subcomplexes with different compositions have been identified which probably have different functions.

It localises to the cellular thylakoid membrane. It catalyses the reaction a plastoquinone + NADH + (n+1) H(+)(in) = a plastoquinol + NAD(+) + n H(+)(out). It carries out the reaction a plastoquinone + NADPH + (n+1) H(+)(in) = a plastoquinol + NADP(+) + n H(+)(out). Functionally, NDH-1 shuttles electrons from an unknown electron donor, via FMN and iron-sulfur (Fe-S) centers, to quinones in the respiratory and/or the photosynthetic chain. The immediate electron acceptor for the enzyme in this species is believed to be plastoquinone. Couples the redox reaction to proton translocation, and thus conserves the redox energy in a proton gradient. Cyanobacterial NDH-1 also plays a role in inorganic carbon-concentration. The polypeptide is NAD(P)H-quinone oxidoreductase subunit M (Prochlorococcus marinus (strain NATL2A)).